A 319-amino-acid chain; its full sequence is RWD domain-containing protein 2B (319 aa).

Positions 41–165 constitute an RWD domain; that stretch reads AELDLLASMF…EWVREHASGY (125 aa). S275 is modified (phosphoserine).

Ubiquitous.

This chain is RWD domain-containing protein 2B (RWDD2B), found in Homo sapiens (Human).